Consider the following 349-residue polypeptide: Heat-inducible transcription repressor HrcA (349 aa).

The protein belongs to the HrcA family.

In terms of biological role, negative regulator of class I heat shock genes (grpE-dnaK-dnaJ and groELS operons). Prevents heat-shock induction of these operons. This is Heat-inducible transcription repressor HrcA from Xylella fastidiosa (strain M23).